Here is a 173-residue protein sequence, read N- to C-terminus: C-type lectin mosGCTL-7 (173 aa).

A signal peptide spans 1-24; the sequence is MVVGWSLLGWALSWLAVATVVVSA. The region spanning 51–167 is the C-type lectin domain; the sequence is NWFKATEYCH…CWDEYYFVCE (117 aa). 2 disulfides stabilise this stretch: cysteine 59–cysteine 166 and cysteine 139–cysteine 158. Asparagine 119 and asparagine 144 each carry an N-linked (GlcNAc...) asparagine glycan.

As to quaternary structure, interacts with putative receptor-type tyrosine-protein phosphatase mosPTP-1; the interaction may mediate the recruitment of Japanese encephalitis virus particles in complex with C-type lectin mosGCTL-7 to the cell surface.

Its subcellular location is the secreted. Carbohydrate-binding protein. In terms of biological role, (Microbial infection) Facilitates Japanese encephalitis virus infection in mosquitoes. This Culex quinquefasciatus (Southern house mosquito) protein is C-type lectin mosGCTL-7.